Reading from the N-terminus, the 206-residue chain is Ras-related protein Rab-7a (206 aa).

Residue Gly15–Thr22 participates in GTP binding. Phosphoserine occurs at positions 17 and 23. Residues Thr34, Thr40, and Thr64 each carry the phosphothreonine modification. GTP contacts are provided by residues Thr34 to Thr40 and Asp63 to Gln67. Residues Tyr37–Phe45 carry the Effector region motif. Phosphoserine is present on Ser72. Residues Tyr78 and Tyr88 each carry the phosphotyrosine modification. Residues Asn125 to Asp128 and Ala157 to Lys158 contribute to the GTP site. S-geranylgeranyl cysteine attachment occurs at residues Cys205 and Cys206.

Belongs to the small GTPase superfamily. Rab family.

It localises to the cytoplasmic vesicle. The protein localises to the phagosome membrane. The protein resides in the late endosome membrane. Its subcellular location is the lysosome membrane. It is found in the autophagosome membrane. It localises to the lipid droplet. The catalysed reaction is GTP + H2O = GDP + phosphate + H(+). In terms of biological role, small GTPase which cycles between active GTP-bound and inactive GDP-bound states. In its active state, binds to a variety of effector proteins playing a key role in the regulation of endo-lysosomal trafficking. Governs early-to-late endosomal maturation, microtubule minus-end as well as plus-end directed endosomal migration and positioning, and endosome-lysosome transport through different protein-protein interaction cascades. Involved in lipophagy, a cytosolic lipase-independent autophagic pathway. Plays a role in phagocyte formation and acidification. The polypeptide is Ras-related protein Rab-7a (Paramecium octaurelia).